The primary structure comprises 440 residues: Enolase 1-2 (440 aa).

H160 and E169 together coordinate substrate. Catalysis depends on E212, which acts as the Proton donor. D247, E296, and D321 together coordinate Mg(2+). Residues E296 and D321 each coordinate substrate. Catalysis depends on K346, which acts as the Proton acceptor. Substrate is bound by residues 373-376 (SHRS) and K397.

Belongs to the enolase family. In terms of assembly, homodimer. Mg(2+) serves as cofactor.

Its subcellular location is the cytoplasm. The enzyme catalyses (2R)-2-phosphoglycerate = phosphoenolpyruvate + H2O. Its pathway is carbohydrate degradation; glycolysis; pyruvate from D-glyceraldehyde 3-phosphate: step 4/5. This is Enolase 1-2 (eno102) from Schizosaccharomyces pombe (strain 972 / ATCC 24843) (Fission yeast).